The sequence spans 232 residues: tRNA1(Val) (adenine(37)-N6)-methyltransferase (232 aa).

The protein belongs to the methyltransferase superfamily. tRNA (adenine-N(6)-)-methyltransferase family.

The protein resides in the cytoplasm. It carries out the reaction adenosine(37) in tRNA1(Val) + S-adenosyl-L-methionine = N(6)-methyladenosine(37) in tRNA1(Val) + S-adenosyl-L-homocysteine + H(+). Its function is as follows. Specifically methylates the adenine in position 37 of tRNA(1)(Val) (anticodon cmo5UAC). This is tRNA1(Val) (adenine(37)-N6)-methyltransferase from Haemophilus influenzae (strain 86-028NP).